Consider the following 129-residue polypeptide: Prefoldin subunit alpha (129 aa).

It belongs to the prefoldin alpha subunit family. Heterohexamer of two alpha and four beta subunits.

Its subcellular location is the cytoplasm. Molecular chaperone capable of stabilizing a range of proteins. Seems to fulfill an ATP-independent, HSP70-like function in archaeal de novo protein folding. The protein is Prefoldin subunit alpha of Thermofilum pendens (strain DSM 2475 / Hrk 5).